The primary structure comprises 290 residues: Serpentine receptor class U-26 (290 aa).

Transmembrane regions (helical) follow at residues 31 to 51 (LPMLFLLVPILYIPITIIIIL), 70 to 90 (LLSAISISQCMCLLFFLADFL), 112 to 134 (FITILTIFTYHINYSTMIFPFLV), 158 to 178 (FSIPFICVYPIIFTFFMFPAI), 185 to 205 (AYPFPFGAIIFRIERTFFGLV), 213 to 233 (NTLFWMTCCIITNFILLLLLI), and 262 to 282 (MIFSYLSNAMIVFLLLELHIV).

Belongs to the nematode receptor-like protein sru family.

The protein localises to the membrane. The sequence is that of Serpentine receptor class U-26 (sru-26) from Caenorhabditis elegans.